The sequence spans 51 residues: Toxin CSTX-18 (51 aa).

Cystine bridges form between cysteine 9-cysteine 22, cysteine 14-cysteine 27, cysteine 21-cysteine 36, and cysteine 29-cysteine 34.

Contains 4 disulfide bonds. In terms of tissue distribution, expressed by the venom gland.

It localises to the secreted. The polypeptide is Toxin CSTX-18 (Cupiennius salei (American wandering spider)).